Reading from the N-terminus, the 305-residue chain is Glycine--tRNA ligase alpha subunit (305 aa).

Belongs to the class-II aminoacyl-tRNA synthetase family. As to quaternary structure, tetramer of two alpha and two beta subunits.

Its subcellular location is the cytoplasm. It carries out the reaction tRNA(Gly) + glycine + ATP = glycyl-tRNA(Gly) + AMP + diphosphate. The chain is Glycine--tRNA ligase alpha subunit from Vibrio parahaemolyticus serotype O3:K6 (strain RIMD 2210633).